Here is a 299-residue protein sequence, read N- to C-terminus: Phosphoribosylaminoimidazole-succinocarboxamide synthase (299 aa).

This sequence belongs to the SAICAR synthetase family.

The enzyme catalyses 5-amino-1-(5-phospho-D-ribosyl)imidazole-4-carboxylate + L-aspartate + ATP = (2S)-2-[5-amino-1-(5-phospho-beta-D-ribosyl)imidazole-4-carboxamido]succinate + ADP + phosphate + 2 H(+). It functions in the pathway purine metabolism; IMP biosynthesis via de novo pathway; 5-amino-1-(5-phospho-D-ribosyl)imidazole-4-carboxamide from 5-amino-1-(5-phospho-D-ribosyl)imidazole-4-carboxylate: step 1/2. The sequence is that of Phosphoribosylaminoimidazole-succinocarboxamide synthase (ade7) from Schizosaccharomyces pombe (strain 972 / ATCC 24843) (Fission yeast).